The chain runs to 320 residues: Mitochondrial fission regulator 1-like-B (320 aa).

Residues 1–37 (MASLGAAAEPERSLFGKDGAEACESPEGRRSGRRKRT) are disordered. Residues 9–30 (EPERSLFGKDGAEACESPEGRR) show a composition bias toward basic and acidic residues.

The protein belongs to the MTFR1 family.

It localises to the mitochondrion outer membrane. Mitochondrial protein required for adaptation of miochondrial dynamics to metabolic changes. Regulates mitochondrial morphology at steady state and mediates AMPK-dependent stress-induced mitochondrial fragmentation via the control of OPA1 levels. The chain is Mitochondrial fission regulator 1-like-B (mtfr1l-b) from Xenopus laevis (African clawed frog).